Here is a 473-residue protein sequence, read N- to C-terminus: 6-phosphogluconate dehydrogenase, decarboxylating (473 aa).

Residues 10 to 15 (GMAVMG), 33 to 35 (NRT), 74 to 76 (VKS), and Asn102 each bind NADP(+). Residues Asn102 and 128–130 (SGG) each bind substrate. Lys182 serves as the catalytic Proton acceptor. Residue 185-186 (HN) participates in substrate binding. Glu189 acts as the Proton donor in catalysis. Substrate-binding residues include Tyr190, Lys260, Arg287, Arg446, and His452.

The protein belongs to the 6-phosphogluconate dehydrogenase family. In terms of assembly, homodimer.

The catalysed reaction is 6-phospho-D-gluconate + NADP(+) = D-ribulose 5-phosphate + CO2 + NADPH. Its pathway is carbohydrate degradation; pentose phosphate pathway; D-ribulose 5-phosphate from D-glucose 6-phosphate (oxidative stage): step 3/3. Functionally, catalyzes the oxidative decarboxylation of 6-phosphogluconate to ribulose 5-phosphate and CO(2), with concomitant reduction of NADP to NADPH. The sequence is that of 6-phosphogluconate dehydrogenase, decarboxylating (gnd) from Buchnera aphidicola subsp. Schizaphis graminum (strain Sg).